Reading from the N-terminus, the 481-residue chain is Phospho-2-dehydro-3-deoxyheptonate aldolase (481 aa).

A disordered region spans residues 1 to 22 (MSQQTTPNAPGWAPDSWRSKPI).

This sequence belongs to the class-II DAHP synthase family. Homodimer. In terms of processing, the N-terminus is blocked.

It carries out the reaction D-erythrose 4-phosphate + phosphoenolpyruvate + H2O = 7-phospho-2-dehydro-3-deoxy-D-arabino-heptonate + phosphate. Its pathway is metabolic intermediate biosynthesis; chorismate biosynthesis; chorismate from D-erythrose 4-phosphate and phosphoenolpyruvate: step 1/7. The polypeptide is Phospho-2-dehydro-3-deoxyheptonate aldolase (aro-8) (Neurospora crassa (strain ATCC 24698 / 74-OR23-1A / CBS 708.71 / DSM 1257 / FGSC 987)).